We begin with the raw amino-acid sequence, 129 residues long: HTH-type transcriptional regulator DdrOP3 (129 aa).

In terms of domain architecture, HTH cro/C1-type spans 7–61 (LRELRQERGLRLKDIAGAAQISVPYLSDLERGRTNPSLETLQSLASTYGITVHDL). Residues 18–37 (LKDIAGAAQISVPYLSDLER) constitute a DNA-binding region (H-T-H motif).

In terms of processing, cleaved between Leu-106 and Arg-107 by the IrrE metalloprotease after exposure to radiation. Cleavage inactivates DdrOP3, leading to derepression of the target genes.

Functionally, repressor specific for genes preceded by a radiation/desiccation response motif (RDRM) site, which is present upstream of several radiation-induced genes. The polypeptide is HTH-type transcriptional regulator DdrOP3 (Deinococcus deserti (strain DSM 17065 / CIP 109153 / LMG 22923 / VCD115)).